We begin with the raw amino-acid sequence, 154 residues long: uncharacterized protein (154 aa).

Transmembrane regions (helical) follow at residues 19–39 (LFAY…GLLL) and 51–71 (ADQV…LLFA).

It is found in the cell membrane. This is an uncharacterized protein from Mycobacterium tuberculosis (strain CDC 1551 / Oshkosh).